Here is a 466-residue protein sequence, read N- to C-terminus: Cysteine--tRNA ligase (466 aa).

Position 28 (C28) interacts with Zn(2+). The short motif at 30–40 is the 'HIGH' region element; the sequence is PTVYNYIHIGN. Residues C208, H233, and E237 each contribute to the Zn(2+) site. The short motif at 265–269 is the 'KMSKS' region element; that stretch reads KMSKS. ATP is bound at residue K268.

Belongs to the class-I aminoacyl-tRNA synthetase family. In terms of assembly, monomer. Zn(2+) is required as a cofactor.

It is found in the cytoplasm. It carries out the reaction tRNA(Cys) + L-cysteine + ATP = L-cysteinyl-tRNA(Cys) + AMP + diphosphate. The chain is Cysteine--tRNA ligase from Staphylococcus aureus (strain bovine RF122 / ET3-1).